The primary structure comprises 414 residues: Glutamyl-tRNA reductase (414 aa).

Substrate-binding positions include 47 to 50 (TCNR), Ser-106, 111 to 113 (EAQ), and Gln-117. Cys-48 functions as the Nucleophile in the catalytic mechanism. An NADP(+)-binding site is contributed by 185–190 (GAGRTG).

This sequence belongs to the glutamyl-tRNA reductase family. In terms of assembly, homodimer.

It catalyses the reaction (S)-4-amino-5-oxopentanoate + tRNA(Glu) + NADP(+) = L-glutamyl-tRNA(Glu) + NADPH + H(+). It participates in porphyrin-containing compound metabolism; protoporphyrin-IX biosynthesis; 5-aminolevulinate from L-glutamyl-tRNA(Glu): step 1/2. Its function is as follows. Catalyzes the NADPH-dependent reduction of glutamyl-tRNA(Glu) to glutamate 1-semialdehyde (GSA). The protein is Glutamyl-tRNA reductase of Herpetosiphon aurantiacus (strain ATCC 23779 / DSM 785 / 114-95).